The following is a 225-amino-acid chain: Protein-L-isoaspartate O-methyltransferase (225 aa).

Ser75 is a catalytic residue.

It belongs to the methyltransferase superfamily. L-isoaspartyl/D-aspartyl protein methyltransferase family.

It localises to the cytoplasm. The catalysed reaction is [protein]-L-isoaspartate + S-adenosyl-L-methionine = [protein]-L-isoaspartate alpha-methyl ester + S-adenosyl-L-homocysteine. Catalyzes the methyl esterification of L-isoaspartyl residues in peptides and proteins that result from spontaneous decomposition of normal L-aspartyl and L-asparaginyl residues. It plays a role in the repair and/or degradation of damaged proteins. The polypeptide is Protein-L-isoaspartate O-methyltransferase (Xylella fastidiosa (strain M23)).